We begin with the raw amino-acid sequence, 500 residues long: MTIFDNYEVWFVIGSQHLYGPETLRQVTQHAEHVVNALNTEAKLPCKLVLKPLGTTPDEITAICRDANYDDRCAGLVVWLHTFSPAKMWINGLTMLNKPLLQFHTQFNAALPWDSIDMDFMNLNQTAHGGREFGFIGARMRQQHAVVTGHWQDKQAHERIGSWMRQAVSKQDTRHLKVCRFGDNMREVAVTDGDKVAAQIKFGFSINTWAVGDLVQVVNSISDGDVNALVDEYESCYTMTPATQIHGEKRQNVLEAARIELGMKRFLEQGGFHAFTTTFEDLHGLKQLPGLAVQRLMQQGYGFAGEGDWKTAALLRIMKVMSTGLQGGTSFMEDYTYHFEKGNDLVLGSHMLEVCPSIAAEEKPILDVQHLGIGGKDDPARLIFNTQTGPAIVASLIDLGDRYRLLVNCIDTVKTPHSLPKLPVANALWKAQPDLPTASEAWILAGGAHHTVFSHALNLNDMRQFAEMHDIEITVIDNDTRLPAFKDALRWNEVYYGFRR.

Residues Glu306, Glu333, His350, and His450 each coordinate Mn(2+).

Belongs to the arabinose isomerase family. Homohexamer. Requires Mn(2+) as cofactor.

The enzyme catalyses beta-L-arabinopyranose = L-ribulose. It participates in carbohydrate degradation; L-arabinose degradation via L-ribulose; D-xylulose 5-phosphate from L-arabinose (bacterial route): step 1/3. In terms of biological role, catalyzes the conversion of L-arabinose to L-ribulose. The protein is L-arabinose isomerase of Escherichia coli O17:K52:H18 (strain UMN026 / ExPEC).